Here is a 626-residue protein sequence, read N- to C-terminus: Two-component response regulator ORR24 (626 aa).

A disordered region spans residues 1–22; that stretch reads MTVEERQGRVGGHGVSGGGGGR. Residues 9–22 are compositionally biased toward gly residues; sequence RVGGHGVSGGGGGR. In terms of domain architecture, Response regulatory spans 30–145; that stretch reads RVLAVDDDPT…QLRTIWQHVI (116 aa). Asp81 carries the post-translational modification 4-aspartylphosphate. Basic and acidic residues predominate over residues 151–162; sequence DAKNRGNDDDAG. Disordered stretches follow at residues 151–215 and 402–440; these read DAKN…KKPR and PLESSNQQHLSRVHSSSADPFSTLVGESPQFPDLGRTTN. Residues 191–202 are compositionally biased toward acidic residues; sequence NGDDGDDSDENS. A DNA-binding region (myb-like GARP) is located at residues 210–269; that stretch reads TQKKPRVVWSVELHRKFVAAVNQLGIEKAVPKKILDLMNVENITRENVASHLQKYRLYLK. Positions 402–421 are enriched in polar residues; that stretch reads PLESSNQQHLSRVHSSSADP.

This sequence belongs to the ARR family. Type-B subfamily. In terms of processing, two-component system major event consists of a His-to-Asp phosphorelay between a sensor histidine kinase (HK) and a response regulator (RR). In plants, the His-to-Asp phosphorelay involves an additional intermediate named Histidine-containing phosphotransfer protein (HPt). This multistep phosphorelay consists of a His-Asp-His-Asp sequential transfer of a phosphate group between first a His and an Asp of the HK protein, followed by the transfer to a conserved His of the HPt protein and finally the transfer to an Asp in the receiver domain of the RR protein.

It is found in the nucleus. Its function is as follows. Transcriptional activator that binds specific DNA sequence. Functions as a response regulator involved in His-to-Asp phosphorelay signal transduction system. Phosphorylation of the Asp residue in the receiver domain activates the ability of the protein to promote the transcription of target genes. May directly activate some type-A response regulators in response to cytokinins. The protein is Two-component response regulator ORR24 of Oryza sativa subsp. japonica (Rice).